We begin with the raw amino-acid sequence, 290 residues long: Putative beta-lactamase HcpC (290 aa).

The N-terminal stretch at 1-25 (MLENVKKSLFRVLCLGALCLGGLMA) is a signal peptide. TPR repeat units follow at residues 29 to 62 (PKEL…KENS), 64 to 98 (CFNL…NYSN), 100 to 133 (CHLL…LKYA), 134 to 170 (EGCA…NDGD), 172 to 205 (CTIL…LKDS), 206 to 242 (PGCF…ENGG), and 244 to 278 (CFNL…GAKG). 7 cysteine pairs are disulfide-bonded: C56–C64, C92–C100, C128–C136, C164–C172, C200–C208, C236–C244, and C272–C280.

This sequence belongs to the hcp beta-lactamase family.

The protein localises to the secreted. The catalysed reaction is a beta-lactam + H2O = a substituted beta-amino acid. Its function is as follows. May hydrolyze 6-aminopenicillinic acid and 7-aminocephalosporanic acid (ACA) derivatives. The sequence is that of Putative beta-lactamase HcpC (hcpC) from Helicobacter pylori (strain J99 / ATCC 700824) (Campylobacter pylori J99).